Here is a 524-residue protein sequence, read N- to C-terminus: Peptide chain release factor 3 (524 aa).

Residues 10 to 278 (DSRRTFAIIS…TFLQFAPAPH (269 aa)) enclose the tr-type G domain. GTP is bound by residues 19 to 26 (SHPDAGKT), 87 to 91 (DTPGH), and 141 to 144 (NKLD).

It belongs to the TRAFAC class translation factor GTPase superfamily. Classic translation factor GTPase family. PrfC subfamily.

It is found in the cytoplasm. Its function is as follows. Increases the formation of ribosomal termination complexes and stimulates activities of RF-1 and RF-2. It binds guanine nucleotides and has strong preference for UGA stop codons. It may interact directly with the ribosome. The stimulation of RF-1 and RF-2 is significantly reduced by GTP and GDP, but not by GMP. The sequence is that of Peptide chain release factor 3 from Enterococcus faecalis (strain ATCC 700802 / V583).